Reading from the N-terminus, the 32-residue chain is Cytochrome b6-f complex subunit 8 (32 aa).

Residues 6–26 (IVSLAWAALMVVFTFSLSLVV) form a helical membrane-spanning segment.

Belongs to the PetN family. As to quaternary structure, the 4 large subunits of the cytochrome b6-f complex are cytochrome b6, subunit IV (17 kDa polypeptide, PetD), cytochrome f and the Rieske protein, while the 4 small subunits are PetG, PetL, PetM and PetN. The complex functions as a dimer.

It is found in the plastid. Its subcellular location is the chloroplast thylakoid membrane. Component of the cytochrome b6-f complex, which mediates electron transfer between photosystem II (PSII) and photosystem I (PSI), cyclic electron flow around PSI, and state transitions. This Illicium oligandrum (Star anise) protein is Cytochrome b6-f complex subunit 8.